Reading from the N-terminus, the 122-residue chain is Ribosome-binding factor A (122 aa).

It belongs to the RbfA family. In terms of assembly, monomer. Binds 30S ribosomal subunits, but not 50S ribosomal subunits or 70S ribosomes.

It localises to the cytoplasm. Functionally, one of several proteins that assist in the late maturation steps of the functional core of the 30S ribosomal subunit. Associates with free 30S ribosomal subunits (but not with 30S subunits that are part of 70S ribosomes or polysomes). Required for efficient processing of 16S rRNA. May interact with the 5'-terminal helix region of 16S rRNA. This is Ribosome-binding factor A from Anaeromyxobacter sp. (strain Fw109-5).